A 400-amino-acid chain; its full sequence is Pectinesterase B (400 aa).

2 residues coordinate substrate: threonine 171 and glutamine 205. Aspartate 228 (proton donor) is an active-site residue. Residue aspartate 261 is the Nucleophile of the active site. Positions 325 and 327 each coordinate substrate.

Belongs to the pectinesterase family.

The enzyme catalyses [(1-&gt;4)-alpha-D-galacturonosyl methyl ester](n) + n H2O = [(1-&gt;4)-alpha-D-galacturonosyl](n) + n methanol + n H(+). The protein operates within glycan metabolism; pectin degradation; 2-dehydro-3-deoxy-D-gluconate from pectin: step 1/5. This chain is Pectinesterase B (pemB), found in Pectobacterium parmentieri.